We begin with the raw amino-acid sequence, 181 residues long: MSSFHATTIFAVQHNGKSAMSGDGQVTFGQAVVMKHTARKVRKLFNGKVLAGFAGSVADAFTLFEMFEAKLEEYNGNLKRASVELAKEWRSDKVLRKLEAMLIVMNQDTLLLVSGTGEVIEPDDGILAIGSGGNYALSAGRALKTYAGENLSAKDIAKAALKIAGEICVYTNDQIILEELE.

Ser-2 is an active-site residue. Na(+)-binding residues include Gly-165, Cys-168, and Thr-171.

Belongs to the peptidase T1B family. HslV subfamily. As to quaternary structure, a double ring-shaped homohexamer of ClpQ is capped on each side by a ring-shaped ClpY homohexamer. The assembly of the ClpQ/ClpY complex is dependent on binding of ATP.

The protein localises to the cytoplasm. In terms of biological role, protease subunit of a proteasome-like degradation complex. This chain is ATP-dependent protease subunit ClpQ (clpQ), found in Bacillus velezensis (strain DSM 23117 / BGSC 10A6 / LMG 26770 / FZB42) (Bacillus amyloliquefaciens subsp. plantarum).